The chain runs to 2455 residues: Ectopic P granules protein 5 homolog (2455 aa).

The tract at residues 1–42 (MATLEKPKKEKSKKSRNRVPIEKEEEEPAELSTSEEQRPAEN) is disordered. Ser44 carries the phosphoserine modification. The disordered stretch occupies residues 77–105 (VTSQEPEGTQEPTETEAQPSAPSAPPSTT). Low complexity predominate over residues 80–97 (QEPEGTQEPTETEAQPSA). Phosphoserine is present on Ser467.

The protein belongs to the EPG5 family.

The protein localises to the cytoplasm. It is found in the perinuclear region. It localises to the lysosome. Functionally, involved in autophagy. Plays a role in late steps of autophagy. This Drosophila melanogaster (Fruit fly) protein is Ectopic P granules protein 5 homolog.